A 342-amino-acid chain; its full sequence is Methylthioribose-1-phosphate isomerase (342 aa).

Residues 49-51 (RGA), Arg-86, and Gln-187 each bind substrate. Asp-228 functions as the Proton donor in the catalytic mechanism. Residue 238-239 (NK) coordinates substrate.

It belongs to the eIF-2B alpha/beta/delta subunits family. MtnA subfamily.

The catalysed reaction is 5-(methylsulfanyl)-alpha-D-ribose 1-phosphate = 5-(methylsulfanyl)-D-ribulose 1-phosphate. It functions in the pathway amino-acid biosynthesis; L-methionine biosynthesis via salvage pathway; L-methionine from S-methyl-5-thio-alpha-D-ribose 1-phosphate: step 1/6. Functionally, catalyzes the interconversion of methylthioribose-1-phosphate (MTR-1-P) into methylthioribulose-1-phosphate (MTRu-1-P). This chain is Methylthioribose-1-phosphate isomerase, found in Citrobacter koseri (strain ATCC BAA-895 / CDC 4225-83 / SGSC4696).